The chain runs to 112 residues: Outer membrane protein assembly factor BamE (112 aa).

Residues 1-19 (MRCKTLTAAAAVLLMLTAG) form the signal peptide. Cysteine 20 carries N-palmitoyl cysteine lipidation. A lipid anchor (S-diacylglycerol cysteine) is attached at cysteine 20.

This sequence belongs to the BamE family. In terms of assembly, part of the Bam complex, which is composed of the outer membrane protein BamA, and four lipoproteins BamB, BamC, BamD and BamE.

The protein localises to the cell outer membrane. Its function is as follows. Part of the outer membrane protein assembly complex, which is involved in assembly and insertion of beta-barrel proteins into the outer membrane. The sequence is that of Outer membrane protein assembly factor BamE from Salmonella typhimurium (strain LT2 / SGSC1412 / ATCC 700720).